A 401-amino-acid polypeptide reads, in one-letter code: Golgi membrane protein 1 (401 aa).

The residue at position 1 (M1) is an N-acetylmethionine. At 1–12 the chain is on the cytoplasmic side; sequence MMGLGNGRRSMK. A helical; Signal-anchor for type II membrane protein membrane pass occupies residues 13–35; the sequence is SPPLVLAALVACIIVLGFNYWIA. The Lumenal segment spans residues 36-401; the sequence is SSRSVDLQTR…DQREKRNHTL (366 aa). The stretch at 40-205 forms a coiled coil; the sequence is VDLQTRIMEL…QRQQLQALSE (166 aa). N109 carries N-linked (GlcNAc...) (complex) asparagine glycosylation. N144 is a glycosylation site (N-linked (GlcNAc...) asparagine). The disordered stretch occupies residues 178-401; that stretch reads TKKGNEAVAS…DQREKRNHTL (224 aa). S187 carries the post-translational modification Phosphoserine. The span at 228–238 shows a compositional bias: polar residues; the sequence is LGNSKSQTPAP. Basic and acidic residues-rich tracts occupy residues 244-255 and 264-285; these read LDSKRQVEKEET and EPQR…DRPV. Over residues 286–295 the composition is skewed to gly residues; the sequence is GGRGFGGAGE. The span at 298-312 shows a compositional bias: polar residues; it reads QTPQVQAALSVSQEN. Position 309 is a phosphoserine; by FAM20C (S309). The span at 350–360 shows a compositional bias: acidic residues; that stretch reads DYNMDENEAES. The segment covering 381-395 has biased composition (basic and acidic residues); sequence EDQKRDTINLLDQRE. A glycan (N-linked (GlcNAc...) asparagine) is linked at N398.

It belongs to the GOLM family. In terms of assembly, interacts with DYM. Post-translationally, glycosylated. In terms of processing, phosphorylation sites are present in the extracellular medium. Widely expressed. Highly expressed in colon, prostate, trachea and stomach. Expressed at lower level in testis, muscle, lymphoid tissues, white blood cells and spleen. Predominantly expressed by cells of the epithelial lineage. Expressed at low level in normal liver. Expression significantly increases in virus (HBV, HCV) infected liver. Expression does not increase in liver disease due to non-viral causes (alcohol-induced liver disease, autoimmune hepatitis). Increased expression in hepatocytes appears to be a general feature of advanced liver disease. In liver tissue from patients with adult giant-cell hepatitis (GCH), it is strongly expressed in hepatocytes-derived syncytial giant cells. Constitutively expressed by biliary epithelial cells but not by hepatocytes.

The protein localises to the golgi apparatus. Its subcellular location is the cis-Golgi network membrane. In terms of biological role, unknown. Cellular response protein to viral infection. This chain is Golgi membrane protein 1 (GOLM1), found in Homo sapiens (Human).